Consider the following 250-residue polypeptide: Isoprenyl transferase (250 aa).

The active site involves D27. Position 27 (D27) interacts with Mg(2+). Residues 28-31, W32, H48, and 76-78 each bind substrate; these read GNRR and STE. N79 acts as the Proton acceptor in catalysis. Substrate-binding positions include F80, R82, R199, and 205–207; that span reads RVS. E218 provides a ligand contact to Mg(2+).

The protein belongs to the UPP synthase family. As to quaternary structure, homodimer. Requires Mg(2+) as cofactor.

Catalyzes the condensation of isopentenyl diphosphate (IPP) with allylic pyrophosphates generating different type of terpenoids. The protein is Isoprenyl transferase of Chlamydia abortus (strain DSM 27085 / S26/3) (Chlamydophila abortus).